An 82-amino-acid polypeptide reads, in one-letter code: Small ribosomal subunit protein bS18 (82 aa).

The protein belongs to the bacterial ribosomal protein bS18 family. As to quaternary structure, part of the 30S ribosomal subunit. Forms a tight heterodimer with protein bS6.

Its function is as follows. Binds as a heterodimer with protein bS6 to the central domain of the 16S rRNA, where it helps stabilize the platform of the 30S subunit. In Chlamydia felis (strain Fe/C-56) (Chlamydophila felis), this protein is Small ribosomal subunit protein bS18.